A 133-amino-acid chain; its full sequence is uncharacterized protein (133 aa).

A disordered region spans residues 44–79 (VENQLASSKTEEQTLKISKKSNLNPAQKSSTFGLEN). Residues 63 to 79 (KSNLNPAQKSSTFGLEN) are compositionally biased toward polar residues.

Its subcellular location is the plastid. The protein resides in the chloroplast. This is an uncharacterized protein from Chlorella vulgaris (Green alga).